A 279-amino-acid polypeptide reads, in one-letter code: Proteasome subunit beta 2 (279 aa).

Positions 1 to 53 (MAAAFDPSGRFPDLFTSVGTSSFSAFLSKAAPELLPGRRPLPPGMATGLTPHA) are cleaved as a propeptide — removed in mature form; by autocatalysis. Catalysis depends on Thr54, which acts as the Nucleophile.

It belongs to the peptidase T1B family. As to quaternary structure, the 20S proteasome core is composed of 14 alpha and 14 beta subunits that assemble into four stacked heptameric rings, resulting in a barrel-shaped structure. The two inner rings, each composed of seven catalytic beta subunits, are sandwiched by two outer rings, each composed of seven alpha subunits. The catalytic chamber with the active sites is on the inside of the barrel. Has a gated structure, the ends of the cylinder being occluded by the N-termini of the alpha-subunits. Is capped by the proteasome-associated ATPase, ARC.

It localises to the cytoplasm. The enzyme catalyses Cleavage of peptide bonds with very broad specificity.. It participates in protein degradation; proteasomal Pup-dependent pathway. With respect to regulation, the formation of the proteasomal ATPase ARC-20S proteasome complex, likely via the docking of the C-termini of ARC into the intersubunit pockets in the alpha-rings, may trigger opening of the gate for substrate entry. Interconversion between the open-gate and close-gate conformations leads to a dynamic regulation of the 20S proteasome proteolysis activity. In terms of biological role, component of the proteasome core, a large protease complex with broad specificity involved in protein degradation. This is Proteasome subunit beta 2 from Salinispora tropica (strain ATCC BAA-916 / DSM 44818 / JCM 13857 / NBRC 105044 / CNB-440).